The following is a 253-amino-acid chain: HTH-type transcriptional regulator YdeO (253 aa).

Positions 137–233 (GKVRNIVNMK…GNSPKRVSKE (97 aa)) constitute an HTH araC/xylS-type domain. DNA-binding regions (H-T-H motif) lie at residues 154-175 (KDICDCLYISESLLKKKLKQEQ) and 200-223 (VNKIAEQCGYASTSYFIYAFRKHF).

Its function is as follows. Induces the expression of gadE and mdtEF. Could also regulate the expression of other genes involved in acid resistance. The polypeptide is HTH-type transcriptional regulator YdeO (ydeO) (Escherichia coli O6:H1 (strain CFT073 / ATCC 700928 / UPEC)).